We begin with the raw amino-acid sequence, 135 residues long: Large ribosomal subunit protein uL16c (135 aa).

Belongs to the universal ribosomal protein uL16 family. Part of the 50S ribosomal subunit.

The protein localises to the plastid. It localises to the chloroplast. The polypeptide is Large ribosomal subunit protein uL16c (Acorus calamus var. americanus (American sweet flag)).